The following is a 152-amino-acid chain: MPKRVQVVLNEDILSLGKDGDLVDVAPGYARNFLLPFGKAVPVTPAVMKQVEHRRAKEVERQAALKQEALNFKTALDTIGRFTVKKQVGEDNVLFGTVTNGDVAEAIEESTKKEIDRRDILVPEIHRTGKYTVTVKLHSEVTAEINLEVVSY.

The protein belongs to the bacterial ribosomal protein bL9 family.

Binds to the 23S rRNA. This chain is Large ribosomal subunit protein bL9, found in Synechococcus sp. (strain CC9902).